Here is a 108-residue protein sequence, read N- to C-terminus: PTS system cellobiose-specific EIIB component (108 aa).

The 106-residue stretch at aspartate 3–asparagine 108 folds into the PTS EIIB type-3 domain. Cysteine 10 serves as the catalytic Phosphocysteine intermediate. Position 10 is a phosphocysteine; by EIIA (cysteine 10).

The catalysed reaction is D-cellobiose(out) + N(pros)-phospho-L-histidyl-[protein] = 6-phospho-beta-D-glucosyl-(1-&gt;4)-D-glucose(in) + L-histidyl-[protein]. In terms of biological role, the phosphoenolpyruvate-dependent sugar phosphotransferase system (sugar PTS), a major carbohydrate active transport system, catalyzes the phosphorylation of incoming sugar substrates concomitantly with their translocation across the cell membrane. Involved in cellobiose transport with PtcA and CelB. This system can also transport lactose. The protein is PTS system cellobiose-specific EIIB component of Lactococcus lactis subsp. lactis (strain IL1403) (Streptococcus lactis).